The sequence spans 274 residues: Elongation factor Ts (274 aa).

Residues threonine 79–valine 82 are involved in Mg(2+) ion dislocation from EF-Tu.

The protein belongs to the EF-Ts family.

The protein localises to the cytoplasm. Its function is as follows. Associates with the EF-Tu.GDP complex and induces the exchange of GDP to GTP. It remains bound to the aminoacyl-tRNA.EF-Tu.GTP complex up to the GTP hydrolysis stage on the ribosome. The protein is Elongation factor Ts of Aster yellows witches'-broom phytoplasma (strain AYWB).